A 148-amino-acid polypeptide reads, in one-letter code: Hemoglobin subunit beta (148 aa).

The 146-residue stretch at 3–148 (DWTDAERSAI…VVSALGRQYH (146 aa)) folds into the Globin domain. Heme b is bound by residues His64 and His93.

It belongs to the globin family. As to quaternary structure, heterotetramer of two alpha chains and two beta chains. In terms of tissue distribution, red blood cells.

In terms of biological role, involved in oxygen transport from gills to the various peripheral tissues. In Salmo salar (Atlantic salmon), this protein is Hemoglobin subunit beta (hbb).